A 188-amino-acid polypeptide reads, in one-letter code: Elongation factor P (188 aa).

At lysine 34 the chain carries N6-(3,6-diaminohexanoyl)-5-hydroxylysine.

It belongs to the elongation factor P family. Post-translationally, may be beta-lysylated on the epsilon-amino group of Lys-34 by the combined action of EpmA and EpmB, and then hydroxylated on the C5 position of the same residue by EpmC (if this protein is present). Lysylation is critical for the stimulatory effect of EF-P on peptide-bond formation. The lysylation moiety may extend toward the peptidyltransferase center and stabilize the terminal 3-CCA end of the tRNA. Hydroxylation of the C5 position on Lys-34 may allow additional potential stabilizing hydrogen-bond interactions with the P-tRNA.

The protein localises to the cytoplasm. The protein operates within protein biosynthesis; polypeptide chain elongation. In terms of biological role, involved in peptide bond synthesis. Alleviates ribosome stalling that occurs when 3 or more consecutive Pro residues or the sequence PPG is present in a protein, possibly by augmenting the peptidyl transferase activity of the ribosome. Modification of Lys-34 is required for alleviation. This Citrobacter koseri (strain ATCC BAA-895 / CDC 4225-83 / SGSC4696) protein is Elongation factor P.